Here is a 218-residue protein sequence, read N- to C-terminus: Zinc finger CCHC-type and RNA-binding motif-containing protein 1 (218 aa).

In terms of domain architecture, RRM spans 10–88; the sequence is STVYVSNLPF…RAIKASIAKD (79 aa). The segment at 105-122 adopts a CCHC-type zinc-finger fold; sequence SRCYECGDTGHLSYACPK. The disordered stretch occupies residues 119-218; that stretch reads ACPKNMLGER…YFSDEDELSD (100 aa). Residues 132 to 188 are a coiled coil; that stretch reads QKKEKKKRKRLVEEEEEEVVEEEESEDEGEDPALDSLSQAIAFQQARIDEEKNKYRH. Residues 144–164 are compositionally biased toward acidic residues; it reads EEEEEEVVEEEESEDEGEDPA. Residues 178–201 are compositionally biased toward basic and acidic residues; sequence RIDEEKNKYRHDPAEASTSEDSRR.

In terms of assembly, component of the U11/U12 snRNPs that are part of the U12-type spliceosome.

The protein localises to the nucleus. This is Zinc finger CCHC-type and RNA-binding motif-containing protein 1 (zcrb1) from Xenopus laevis (African clawed frog).